The following is a 255-amino-acid chain: Thiazole synthase (255 aa).

The active-site Schiff-base intermediate with DXP is Lys95. 1-deoxy-D-xylulose 5-phosphate-binding positions include Gly156, 182–183 (AG), and 204–205 (NT).

Belongs to the ThiG family. Homotetramer. Forms heterodimers with either ThiH or ThiS.

It localises to the cytoplasm. It catalyses the reaction [ThiS sulfur-carrier protein]-C-terminal-Gly-aminoethanethioate + 2-iminoacetate + 1-deoxy-D-xylulose 5-phosphate = [ThiS sulfur-carrier protein]-C-terminal Gly-Gly + 2-[(2R,5Z)-2-carboxy-4-methylthiazol-5(2H)-ylidene]ethyl phosphate + 2 H2O + H(+). It functions in the pathway cofactor biosynthesis; thiamine diphosphate biosynthesis. Its function is as follows. Catalyzes the rearrangement of 1-deoxy-D-xylulose 5-phosphate (DXP) to produce the thiazole phosphate moiety of thiamine. Sulfur is provided by the thiocarboxylate moiety of the carrier protein ThiS. In vitro, sulfur can be provided by H(2)S. This Aeromonas salmonicida (strain A449) protein is Thiazole synthase.